A 61-amino-acid polypeptide reads, in one-letter code: Protein stunted (61 aa).

The tract at residues 3–15 (AWRAAGITYIQYS) is sufficient for mth activation.

This sequence belongs to the eukaryotic ATPase epsilon family.

Activates the G-protein coupled receptor mth in vitro, leading to increased intracellular calcium ion levels. This chain is Protein stunted, found in Drosophila melanogaster (Fruit fly).